The following is a 75-amino-acid chain: Protein BRICK1 (75 aa).

Ala2 bears the N-acetylalanine mark. Residues Met41–Glu72 adopt a coiled-coil conformation.

It belongs to the BRK1 family. In terms of assembly, homotrimer when in free form. Directly interacts with WASF2. Component of the WAVE1 complex composed of ABI2, CYFIP1 or CYFIP2, BRK1, NCKAP1 and WASF1/WAVE1. Within the complex, a heterodimer containing NCKAP1 and CYFIP1 interacts with a heterotrimer formed by WAVE1, ABI2 and BRK1.

It is found in the cytoplasm. Its subcellular location is the cytoskeleton. Its function is as follows. Involved in regulation of actin and microtubule organization. Part of a WAVE complex that activates the Arp2/3 complex. As component of the WAVE1 complex, required for BDNF-NTRK2 endocytic trafficking and signaling from early endosomes. The chain is Protein BRICK1 (BRK1) from Homo sapiens (Human).